A 263-amino-acid polypeptide reads, in one-letter code: Metaxin-2 (263 aa).

An N-acetylserine modification is found at Ser-2.

Belongs to the metaxin family. Interacts with MTX1/metaxin-1. Associates with the mitochondrial contact site and cristae organizing system (MICOS) complex, composed of at least MICOS10/MIC10, CHCHD3/MIC19, CHCHD6/MIC25, APOOL/MIC27, IMMT/MIC60, APOO/MIC23/MIC26 and QIL1/MIC13. This complex was also known under the names MINOS or MitOS complex. The MICOS complex associates with mitochondrial outer membrane proteins SAMM50, MTX1 and MTX2 (together described as components of the mitochondrial outer membrane sorting assembly machinery (SAM) complex) and DNAJC11, mitochondrial inner membrane protein TMEM11 and with HSPA9. The MICOS and SAM complexes together with DNAJC11 are part of a large protein complex spanning both membranes termed the mitochondrial intermembrane space bridging (MIB) complex.

It is found in the mitochondrion outer membrane. The protein resides in the mitochondrion. Functionally, involved in transport of proteins into the mitochondrion. In Mus musculus (Mouse), this protein is Metaxin-2 (Mtx2).